The chain runs to 420 residues: Nucleobindin-2 (420 aa).

The first 24 residues, 1–24, serve as a signal peptide directing secretion; the sequence is MRWRIIQVQYCFLLVPCMLTALEA. Residues 171 to 223 mediate DNA binding; that stretch reads RTRHEEFKKYEMMKEHERREYLKTLSEEKRKEEESKFEEMKRKHEDHPKVNHP. A disordered region spans residues 193-225; it reads KTLSEEKRKEEESKFEEMKRKHEDHPKVNHPGS. Positions 213 to 420 are binds to necdin; the sequence is KHEDHPKVNH…AGELKFEPHT (208 aa). 2 EF-hand domains span residues 241–276 and 293–328; these read PNDF…ELEK and ERLR…KEFL. 8 residues coordinate Ca(2+): Asp-254, Asn-256, Asp-258, Glu-265, Asp-306, Asn-308, Asp-310, and Glu-317. Residues 304–334 carry the GBA motif; that stretch reads EIDNNKDRLVTLEEFLRATEKKEFLEPDSWE. Residue Ser-332 is modified to Phosphoserine. A compositionally biased stretch (basic and acidic residues) spans 365–389; it reads AEELQKQKEDLQRQHDHLEAQKQEY. The interval 365–420 is disordered; the sequence is AEELQKQKEDLQRQHDHLEAQKQEYHQAVQHLEQKKLQQGIAPSGPAGELKFEPHT.

It belongs to the nucleobindin family. In terms of assembly, interacts (via GBA motif) with guanine nucleotide-binding protein G(i) alpha subunit GNAI3. Preferentially interacts with inactive rather than active GNAI3. Interaction with GNAI3 is inhibited when NUCB2 binds calcium, probably due to a conformational change which renders the GBA motif inaccessible. Binds to the postmitotic growth suppressor NDN; coexpression abolishes NUCB2 secretion. Interacts with MC4R. Found in liver, heart, thymus, muscle, intestine, kidney, lung, spleen and throughout the brain, in cerebral cortex, hippocampus, hypothalamus and medulla oblongata. Nucb2 and necdin levels were higher in postmitotic neurons.

The protein resides in the cytoplasm. It is found in the perikaryon. It localises to the endoplasmic reticulum. Its subcellular location is the golgi apparatus. The protein localises to the nucleus envelope. The protein resides in the membrane. It is found in the secreted. Its function is as follows. Calcium-binding protein which may have a role in calcium homeostasis. Acts as a non-receptor guanine nucleotide exchange factor which binds to and activates guanine nucleotide-binding protein (G-protein) alpha subunit GNAI3. In terms of biological role, anorexigenic peptide, seems to play an important role in hypothalamic pathways regulating food intake and energy homeostasis, acting in a leptin-independent manner. May also exert hypertensive roles and modulate blood pressure through directly acting on peripheral arterial resistance. In intestinal epithelial cells, plays a role in the inhibition of hepatic glucose production via MC4R receptor leading to increased cyclic adenosine monophosphate (cAMP) levels and glucagon-like peptide 1 (GLP-1) secretion. The polypeptide is Nucleobindin-2 (Nucb2) (Mus musculus (Mouse)).